The following is a 78-amino-acid chain: Conotoxin 6 (78 aa).

An N-terminal signal peptide occupies residues 1–22 (MKLTCMMIVAVLFLTAWIFITA). Residues 23–51 (DNSRNGIENLPRMRRHEMKNPKASKLNKR) constitute a propeptide that is removed on maturation. Disulfide bonds link C53-C69, C60-C73, and C68-C77.

This sequence belongs to the conotoxin O1 superfamily. In terms of tissue distribution, expressed by the venom duct.

Its subcellular location is the secreted. The polypeptide is Conotoxin 6 (Conus imperialis (Imperial cone)).